The chain runs to 100 residues: Mitochondrial import inner membrane translocase subunit Tim10 B (100 aa).

The short motif at 25 to 49 is the Twin CX3C motif element; sequence CFQRCVPSLHHRALDAEEEACLHSC. Intrachain disulfides connect Cys-25–Cys-49 and Cys-29–Cys-45.

Belongs to the small Tim family. As to quaternary structure, component of the TIM22 complex, which core is composed of TIMM22, associated with TIMM10 (TIMM10A and/or TIMM10B), TIMM9, AGK and TIMM29.

Its subcellular location is the mitochondrion inner membrane. Functionally, component of the TIM22 complex, a complex that mediates the import and insertion of multi-pass transmembrane proteins into the mitochondrial inner membrane. The TIM22 complex forms a twin-pore translocase that uses the membrane potential as the external driving force. In the TIM22 complex, it may act as a docking point for the soluble 70 kDa complex that guides the target proteins in transit through the aqueous mitochondrial intermembrane space. The sequence is that of Mitochondrial import inner membrane translocase subunit Tim10 B (Timm10b) from Rattus norvegicus (Rat).